The primary structure comprises 752 residues: MGFTLLIDNYDSFTWNIYADLASVGGNPFVVRNDKITLKEIEGMFADGELERIVISPGPGHPRTDSGVSRDVIAWGMGKLPILGVCMGLECIVDLLGGEIAYAGEIKHGKTSLVQHDSIGVFHNLPQFLSSTRYHSLSAQIQSLPSVLQVTSTTKESGVIMGVRHRTFTVEAVQYHPESCMSEGGRGLMANFIQMKGGKWGGENAWCGVPAEGEGEQPKAKTNGAPSLPTILNKIHAQRLLDVEQAEKIPATTPANVSTSLSLYTSPPLINFRGRMVSTPHTAVMAEIKRASPSKGDIAPTASAPQQALKYALAGASVISVLTEPTWFKGSLLDMLAVRNAVDSLPNRPAILRKDFVLSKYMIDEARLYGADTVLLIVAMLEPQQLKELYDYSVSLGMEPLVEVNNPTELSLALEIGSKVIGVNNRNLHDFNVDMSTTSRVNAALNGRDVVLCALSGISSHEDVEKYVKEGVKGVLVGEALMRASDTKAFLRSLIGLPPLEVVPKPRPLVKICGIRSTNDAKLAINAGADLLGVILVPGTKRCISTSTAREISALVQSARSQSSSKPLEPSLSSPWFTSQSALLSSRRKPLLVGVFQNQSLSDILSAVDEIGLDLVQLHGDEPQAWAKFIPVPVVKVFRVSPEGIVRGGEIRRPGLNQAILLDAGGASGGGGEGKAFPWEHAKRLIQSGEVGSEGHVPLPVILAGGLTPENVGQAIEQAGEGVWCVDVSSGVEGEGGKVKEKVEAFVKAVRG.

The Glutamine amidotransferase type-1 domain maps to 3–202 (FTLLIDNYDS…IQMKGGKWGG (200 aa)). 58–60 (GPG) lines the L-glutamine pocket. The active-site Nucleophile; for GATase activity is the Cys-86. An L-glutamine-binding site is contributed by 136-137 (SL). Residues His-176 and Glu-178 each act as for GATase activity in the active site. The interval 231 to 495 (ILNKIHAQRL…DTKAFLRSLI (265 aa)) is indole-3-glycerol phosphate synthase. Residues 509-752 (LVKICGIRST…VEAFVKAVRG (244 aa)) are N-(5'-phosphoribosyl)anthranilate isomerase.

The enzyme catalyses N-(5-phospho-beta-D-ribosyl)anthranilate = 1-(2-carboxyphenylamino)-1-deoxy-D-ribulose 5-phosphate. It carries out the reaction 1-(2-carboxyphenylamino)-1-deoxy-D-ribulose 5-phosphate + H(+) = (1S,2R)-1-C-(indol-3-yl)glycerol 3-phosphate + CO2 + H2O. It catalyses the reaction chorismate + L-glutamine = anthranilate + pyruvate + L-glutamate + H(+). The protein operates within amino-acid biosynthesis; L-tryptophan biosynthesis; L-tryptophan from chorismate: step 1/5. It functions in the pathway amino-acid biosynthesis; L-tryptophan biosynthesis; L-tryptophan from chorismate: step 3/5. It participates in amino-acid biosynthesis; L-tryptophan biosynthesis; L-tryptophan from chorismate: step 4/5. Its function is as follows. Trifunctional enzyme bearing the Gln amidotransferase (GATase) domain of anthranilate synthase, indole-glycerolphosphate synthase, and phosphoribosylanthranilate isomerase activities. This chain is Multifunctional tryptophan biosynthesis protein (TRP1), found in Cryptococcus neoformans var. grubii serotype A (strain H99 / ATCC 208821 / CBS 10515 / FGSC 9487) (Filobasidiella neoformans var. grubii).